Reading from the N-terminus, the 198-residue chain is Zinc finger protein 41 homolog (198 aa).

Residues 1-12 (MEKPAGRKKKTP) show a composition bias toward basic residues. The tract at residues 1–55 (MEKPAGRKKKTPTPREEADVQKSALREEKVSGDRKPPERPTVPRKPRTEPCLSPE) is disordered. Over residues 13 to 38 (TPREEADVQKSALREEKVSGDRKPPE) the composition is skewed to basic and acidic residues. 4 C2H2-type zinc fingers span residues 87–109 (YECS…QRVH), 115–137 (FKCA…QRTH), 143–165 (FKCG…QKTH), and 171–193 (YECT…QKRH).

It belongs to the krueppel C2H2-type zinc-finger protein family.

The protein resides in the nucleus. A putative DNA-binding regulatory protein associated with meiosis in spermatogenesis. The chain is Zinc finger protein 41 homolog (ZFP41) from Homo sapiens (Human).